Here is a 683-residue protein sequence, read N- to C-terminus: MADIKTGIFAKNVQKRLNRAQEKVLQKLGKADETKDEQFEEYVQNFKRQEAEGTRLQRELRGYLAAIKGMQEASMKLTESLHEVYEPDWYGREDVKMVGEKCDVLWEDFHQKLVDGSLLTLDTYLGQFPDIKNRIAKRSRKLVDYDSARHHLEALQSSKRKDESRISKAEEEFQKAQKVFEEFNVDLQEELPSLWSRRVGFYVNTFKNVSSLEAKFHKEIAVLCHKLYEVMTKLGDQHADKAFSIQGAPSDSGPLRIAKTPSPPEEASPLPSPTASPNHTLAPASPAPVRPRSPSQTRKGPPVPPLPKVTPTKELQQENIINFFEDNFVPEINVTTPSQNEVLEVKKEETLLDLDFDPFKPDVTPAGSAAATHSPMSQTLPWDLWTTSTDLVQPASGGSFNDFTQPQDTSLFTMQTDQNMAETEQALPTEPQAEEPPTTAAAPTAGLDLGLEMEEPKEEAAIPPGTDAGETVGTEGSTGEEAEAEKAALPAGEGESPEGAKIDVESTELASSESPQAAELEAGAPQEKVIPSVVIEPASNHEGEEHQETTTGTETREATEDVAPQGPAGEKQELATEPTPLDSQAATPAPAGAVDASLSAGDAAQELPPGFLYKVETLHDFEAANSDELTLQRGDVVLVVPSDSEADQDAGWLVGVKESDWLQYRDLATYKGLFPENFTRHLE.

Coiled coils occupy residues 10 to 83 (AKNV…SLHE) and 144 to 191 (DYDS…QEEL). The BAR domain occupies 24-240 (VLQKLGKADE…MTKLGDQHAD (217 aa)). Disordered regions lie at residues 244 to 311 (SIQG…KVTP), 421 to 443 (AETE…AAAP), and 455 to 599 (EPKE…ASLS). Ser252 bears the Phosphoserine mark. Thr260 carries the phosphothreonine modification. The span at 261-274 (PSPPEEASPLPSPT) shows a compositional bias: pro residues. 4 positions are modified to phosphoserine: Ser262, Ser268, Ser272, and Ser276. A Phosphothreonine modification is found at Thr280. 2 stretches are compositionally biased toward low complexity: residues 424 to 443 (EQAL…AAAP) and 468 to 477 (AGETVGTEGS). Ser496 bears the Phosphoserine mark. Basic and acidic residues predominate over residues 539 to 559 (SNHEGEEHQETTTGTETREAT). The span at 585-596 (AATPAPAGAVDA) shows a compositional bias: low complexity. In terms of domain architecture, SH3 spans 610-683 (GFLYKVETLH…FPENFTRHLE (74 aa)). Ser626 carries the post-translational modification Phosphoserine.

In terms of assembly, heterodimer with BIN1. Binds SH3GLB1. Interacts with REPS1 and SGIP1. Binds AP2A2. Interacts with AP2B1. Interacts with DNM1 and SYNJ1.

The protein localises to the cytoplasmic vesicle. It localises to the secretory vesicle. It is found in the synaptic vesicle membrane. The protein resides in the cytoplasm. Its subcellular location is the cytoskeleton. May participate in mechanisms of regulated exocytosis in synapses and certain endocrine cell types. May control the properties of the membrane associated cytoskeleton. The polypeptide is Amphiphysin (Amph) (Rattus norvegicus (Rat)).